The primary structure comprises 461 residues: Cysteine--tRNA ligase (461 aa).

Cys-27 contributes to the Zn(2+) binding site. The short motif at 29–39 (ITVYDYCHIGH) is the 'HIGH' region element. Positions 208, 233, and 237 each coordinate Zn(2+). A 'KMSKS' region motif is present at residues 265 to 269 (KMSKS). Residue Lys-268 coordinates ATP.

It belongs to the class-I aminoacyl-tRNA synthetase family. In terms of assembly, monomer. Requires Zn(2+) as cofactor.

The protein resides in the cytoplasm. The enzyme catalyses tRNA(Cys) + L-cysteine + ATP = L-cysteinyl-tRNA(Cys) + AMP + diphosphate. The sequence is that of Cysteine--tRNA ligase from Chromohalobacter salexigens (strain ATCC BAA-138 / DSM 3043 / CIP 106854 / NCIMB 13768 / 1H11).